We begin with the raw amino-acid sequence, 270 residues long: Hydroxyethylthiazole kinase (270 aa).

Residue methionine 47 participates in substrate binding. ATP-binding residues include arginine 123 and serine 170. Glycine 197 is a binding site for substrate.

The protein belongs to the Thz kinase family. Mg(2+) is required as a cofactor.

It carries out the reaction 5-(2-hydroxyethyl)-4-methylthiazole + ATP = 4-methyl-5-(2-phosphooxyethyl)-thiazole + ADP + H(+). It functions in the pathway cofactor biosynthesis; thiamine diphosphate biosynthesis; 4-methyl-5-(2-phosphoethyl)-thiazole from 5-(2-hydroxyethyl)-4-methylthiazole: step 1/1. Functionally, catalyzes the phosphorylation of the hydroxyl group of 4-methyl-5-beta-hydroxyethylthiazole (THZ). In Syntrophus aciditrophicus (strain SB), this protein is Hydroxyethylthiazole kinase.